The chain runs to 435 residues: Nuclear hormone receptor family member nhr-28 (435 aa).

Positions 5-80 (KKPCSVCGEA…VGMRKSAVQR (76 aa)) form a DNA-binding region, nuclear receptor. 2 consecutive NR C4-type zinc fingers follow at residues 8–28 (CSVC…CRAC) and 44–63 (CRAM…CRAC). Residues 84–106 (LFGRQDSSDGSNPRVSPSTSWPM) are disordered. A compositionally biased stretch (polar residues) spans 91-104 (SDGSNPRVSPSTSW). The NR LBD domain occupies 113-374 (IEEPGMATLN…ETFYELVSGR (262 aa)).

This sequence belongs to the nuclear hormone receptor family.

It is found in the nucleus. Its function is as follows. Orphan nuclear receptor. The protein is Nuclear hormone receptor family member nhr-28 of Caenorhabditis briggsae.